We begin with the raw amino-acid sequence, 243 residues long: Putative glycerophosphodiester phosphodiesterase YhdW (243 aa).

One can recognise a GP-PDE domain in the interval Met1–Gly238. His6 acts as the Proton acceptor in catalysis. Residues Glu33 and Asp35 each coordinate Ca(2+). His48 (proton donor) is an active-site residue. Glu107 is a Ca(2+) binding site.

Belongs to the glycerophosphoryl diester phosphodiesterase family. It depends on Ca(2+) as a cofactor.

It carries out the reaction a sn-glycero-3-phosphodiester + H2O = an alcohol + sn-glycerol 3-phosphate + H(+). Glycerophosphodiester phosphodiesterase hydrolyzes glycerophosphodiesters into glycerol-3-phosphate (G3P) and the corresponding alcohol. The protein is Putative glycerophosphodiester phosphodiesterase YhdW (yhdW) of Bacillus subtilis (strain 168).